A 454-amino-acid polypeptide reads, in one-letter code: LETM1 domain-containing protein YLH47, mitochondrial (454 aa).

A mitochondrion-targeting transit peptide spans 1-45 (MLKYRSLPIKRAIHHPAPGITPISPRIMVSRLRVIPSFNLKFNRW). The Mitochondrial intermembrane portion of the chain corresponds to 46–136 (NSSVPESSKK…LKRTTQDIVR (91 aa)). A disordered region spans residues 51-73 (ESSKKELKTTDGNQESASKVSPV). Residues 137–157 (LVPFAAFLIIPFAELLLPFAL) form a helical membrane-spanning segment. The Mitochondrial matrix portion of the chain corresponds to 158–454 (KLFPNLLPST…IGEAAAIKEK (297 aa)). Positions 177-371 (KLENLRNTRK…LCDVLIGIPD (195 aa)) constitute a Letm1 RBD domain. The stretch at 376 to 423 (EVKVNVVKEDEASAKQKLKQLREQEEIMKEEEQQEENAIVSVKDELSL) forms a coiled coil. 2 stretches are compositionally biased toward basic and acidic residues: residues 420-430 (ELSLDDQDKNI) and 437-454 (VKPH…IKEK). The interval 420-454 (ELSLDDQDKNIDAAAPDVKPHDTKPIGEAAAIKEK) is disordered.

As to quaternary structure, associates with the mitochondrial ribosomes.

It is found in the mitochondrion inner membrane. In terms of biological role, involved in mitochondrial potassium homeostasis through the mitochondrial K(+)/H(+) exchange regulation. The chain is LETM1 domain-containing protein YLH47, mitochondrial (YLH47) from Saccharomyces cerevisiae (strain ATCC 204508 / S288c) (Baker's yeast).